Here is a 290-residue protein sequence, read N- to C-terminus: Phosphatidylserine decarboxylase proenzyme (290 aa).

Residues aspartate 96, histidine 153, and serine 257 each act as charge relay system; for autoendoproteolytic cleavage activity in the active site. The active-site Schiff-base intermediate with substrate; via pyruvic acid; for decarboxylase activity is the serine 257. Serine 257 is modified (pyruvic acid (Ser); by autocatalysis).

The protein belongs to the phosphatidylserine decarboxylase family. PSD-B subfamily. Prokaryotic type I sub-subfamily. In terms of assembly, heterodimer of a large membrane-associated beta subunit and a small pyruvoyl-containing alpha subunit. Requires pyruvate as cofactor. Is synthesized initially as an inactive proenzyme. Formation of the active enzyme involves a self-maturation process in which the active site pyruvoyl group is generated from an internal serine residue via an autocatalytic post-translational modification. Two non-identical subunits are generated from the proenzyme in this reaction, and the pyruvate is formed at the N-terminus of the alpha chain, which is derived from the carboxyl end of the proenzyme. The autoendoproteolytic cleavage occurs by a canonical serine protease mechanism, in which the side chain hydroxyl group of the serine supplies its oxygen atom to form the C-terminus of the beta chain, while the remainder of the serine residue undergoes an oxidative deamination to produce ammonia and the pyruvoyl prosthetic group on the alpha chain. During this reaction, the Ser that is part of the protease active site of the proenzyme becomes the pyruvoyl prosthetic group, which constitutes an essential element of the active site of the mature decarboxylase.

It is found in the cell membrane. It carries out the reaction a 1,2-diacyl-sn-glycero-3-phospho-L-serine + H(+) = a 1,2-diacyl-sn-glycero-3-phosphoethanolamine + CO2. Its pathway is phospholipid metabolism; phosphatidylethanolamine biosynthesis; phosphatidylethanolamine from CDP-diacylglycerol: step 2/2. Catalyzes the formation of phosphatidylethanolamine (PtdEtn) from phosphatidylserine (PtdSer). This Haemophilus influenzae (strain ATCC 51907 / DSM 11121 / KW20 / Rd) protein is Phosphatidylserine decarboxylase proenzyme.